The sequence spans 752 residues: Granule-bound starch synthase 2, chloroplastic/amyloplastic (752 aa).

A chloroplast-targeting transit peptide spans 1–57; it reads MMLSLGSDATVLPFHAKNLKFTPKLSTLNGDLAFSKGLGVGRLNCGSVRLNHKQHVR. 2 disordered regions span residues 116–146 and 224–253; these read LEGNGVSYESSEKSLSRDSNPQKGSSSSGSA and FENFEGANEPSSKEVANEAENFESGGEKPP. Residue Lys-275 coordinates ADP-alpha-D-glucose.

This sequence belongs to the glycosyltransferase 1 family. Bacterial/plant glycogen synthase subfamily. As to expression, widely expressed.

Its subcellular location is the plastid. The protein localises to the chloroplast. The protein resides in the amyloplast. The catalysed reaction is [(1-&gt;4)-alpha-D-glucosyl](n) + ADP-alpha-D-glucose = [(1-&gt;4)-alpha-D-glucosyl](n+1) + ADP + H(+). It functions in the pathway glycan biosynthesis; starch biosynthesis. The chain is Granule-bound starch synthase 2, chloroplastic/amyloplastic from Pisum sativum (Garden pea).